The chain runs to 359 residues: 3-dehydroquinate synthase (359 aa).

NAD(+) is bound by residues 72 to 77 (DGEHYK), 106 to 110 (GVIGD), 130 to 131 (TT), lysine 143, and lysine 152. Zn(2+) is bound by residues glutamate 185, histidine 248, and histidine 265.

It belongs to the sugar phosphate cyclases superfamily. Dehydroquinate synthase family. The cofactor is Co(2+). Requires Zn(2+) as cofactor. NAD(+) is required as a cofactor.

It localises to the cytoplasm. The catalysed reaction is 7-phospho-2-dehydro-3-deoxy-D-arabino-heptonate = 3-dehydroquinate + phosphate. It functions in the pathway metabolic intermediate biosynthesis; chorismate biosynthesis; chorismate from D-erythrose 4-phosphate and phosphoenolpyruvate: step 2/7. Functionally, catalyzes the conversion of 3-deoxy-D-arabino-heptulosonate 7-phosphate (DAHP) to dehydroquinate (DHQ). This chain is 3-dehydroquinate synthase, found in Thermodesulfovibrio yellowstonii (strain ATCC 51303 / DSM 11347 / YP87).